The sequence spans 1430 residues: DNA-directed RNA polymerase subunit beta' (1430 aa).

4 residues coordinate Zn(2+): C70, C72, C85, and C88. 3 residues coordinate Mg(2+): D495, D497, and D499. C838, C912, C919, and C922 together coordinate Zn(2+).

Belongs to the RNA polymerase beta' chain family. As to quaternary structure, the RNAP catalytic core consists of 2 alpha, 1 beta, 1 beta' and 1 omega subunit. When a sigma factor is associated with the core the holoenzyme is formed, which can initiate transcription. It depends on Mg(2+) as a cofactor. Zn(2+) serves as cofactor.

The enzyme catalyses RNA(n) + a ribonucleoside 5'-triphosphate = RNA(n+1) + diphosphate. In terms of biological role, DNA-dependent RNA polymerase catalyzes the transcription of DNA into RNA using the four ribonucleoside triphosphates as substrates. This is DNA-directed RNA polymerase subunit beta' from Rhodospirillum centenum (strain ATCC 51521 / SW).